The chain runs to 89 residues: Small ribosomal subunit protein uS15 (89 aa).

It belongs to the universal ribosomal protein uS15 family. Part of the 30S ribosomal subunit. Forms a bridge to the 50S subunit in the 70S ribosome, contacting the 23S rRNA.

In terms of biological role, one of the primary rRNA binding proteins, it binds directly to 16S rRNA where it helps nucleate assembly of the platform of the 30S subunit by binding and bridging several RNA helices of the 16S rRNA. Functionally, forms an intersubunit bridge (bridge B4) with the 23S rRNA of the 50S subunit in the ribosome. The protein is Small ribosomal subunit protein uS15 of Shewanella baltica (strain OS185).